A 426-amino-acid chain; its full sequence is Histidine--tRNA ligase (426 aa).

Belongs to the class-II aminoacyl-tRNA synthetase family. In terms of assembly, homodimer.

The protein localises to the cytoplasm. The catalysed reaction is tRNA(His) + L-histidine + ATP = L-histidyl-tRNA(His) + AMP + diphosphate + H(+). The chain is Histidine--tRNA ligase from Picosynechococcus sp. (strain ATCC 27264 / PCC 7002 / PR-6) (Agmenellum quadruplicatum).